Reading from the N-terminus, the 637-residue chain is Biosynthetic arginine decarboxylase (637 aa).

Lys101 is modified (N6-(pyridoxal phosphate)lysine). Substrate is bound at residue 286–296; the sequence is FDVGGGLAVDY.

It belongs to the Orn/Lys/Arg decarboxylase class-II family. SpeA subfamily. The cofactor is Mg(2+). It depends on pyridoxal 5'-phosphate as a cofactor.

It carries out the reaction L-arginine + H(+) = agmatine + CO2. Its pathway is amine and polyamine biosynthesis; agmatine biosynthesis; agmatine from L-arginine: step 1/1. Catalyzes the biosynthesis of agmatine from arginine. This is Biosynthetic arginine decarboxylase from Shewanella baltica (strain OS223).